A 46-amino-acid polypeptide reads, in one-letter code: DNA-directed RNA polymerase subunit Rpo12 (46 aa).

The Zn(2+) site is built by Cys8, Cys23, and Cys26.

The protein belongs to the archaeal Rpo12/eukaryotic RPC10 RNA polymerase subunit family. In terms of assembly, part of the RNA polymerase complex. Zn(2+) serves as cofactor.

The protein localises to the cytoplasm. The enzyme catalyses RNA(n) + a ribonucleoside 5'-triphosphate = RNA(n+1) + diphosphate. DNA-dependent RNA polymerase (RNAP) catalyzes the transcription of DNA into RNA using the four ribonucleoside triphosphates as substrates. The protein is DNA-directed RNA polymerase subunit Rpo12 of Archaeoglobus fulgidus (strain ATCC 49558 / DSM 4304 / JCM 9628 / NBRC 100126 / VC-16).